A 134-amino-acid polypeptide reads, in one-letter code: Small ribosomal subunit protein bS16 (134 aa).

The interval glycine 80–glutamate 134 is disordered. Residues alanine 115–glutamate 134 show a composition bias toward low complexity.

It belongs to the bacterial ribosomal protein bS16 family.

The sequence is that of Small ribosomal subunit protein bS16 from Brucella anthropi (strain ATCC 49188 / DSM 6882 / CCUG 24695 / JCM 21032 / LMG 3331 / NBRC 15819 / NCTC 12168 / Alc 37) (Ochrobactrum anthropi).